The primary structure comprises 234 residues: Ubiquinone biosynthesis O-methyltransferase (234 aa).

Residues R36, G56, D77, and M125 each coordinate S-adenosyl-L-methionine.

Belongs to the methyltransferase superfamily. UbiG/COQ3 family.

It carries out the reaction a 3-demethylubiquinol + S-adenosyl-L-methionine = a ubiquinol + S-adenosyl-L-homocysteine + H(+). The catalysed reaction is a 3-(all-trans-polyprenyl)benzene-1,2-diol + S-adenosyl-L-methionine = a 2-methoxy-6-(all-trans-polyprenyl)phenol + S-adenosyl-L-homocysteine + H(+). Its pathway is cofactor biosynthesis; ubiquinone biosynthesis. In terms of biological role, O-methyltransferase that catalyzes the 2 O-methylation steps in the ubiquinone biosynthetic pathway. The chain is Ubiquinone biosynthesis O-methyltransferase from Actinobacillus pleuropneumoniae serotype 7 (strain AP76).